The chain runs to 696 residues: C2 domain-containing protein 2 (696 aa).

The chain crosses the membrane as a helical span at residues Val8–Leu28. Positions Glu45–Leu238 constitute an SMP-LBD domain. Position 54 is a phosphoserine (Ser54). The 117-residue stretch at Pro241–Phe357 folds into the C2 domain. At Ser436 the chain carries Phosphoserine. Position 440 is a phosphothreonine (Thr440). Residues Ala551–Leu611 are disordered. Over residues Lys573–Ser588 the composition is skewed to basic and acidic residues. A Phosphoserine modification is found at Ser581.

It is found in the membrane. The polypeptide is C2 domain-containing protein 2 (Mus musculus (Mouse)).